A 929-amino-acid chain; its full sequence is von Willebrand factor C and EGF domain-containing protein (929 aa).

Residues 1–21 form the signal peptide; it reads MWARLLLHVAYILIPLLGSSA. Positions 70-98 constitute an EGF-like 1 domain; the sequence is LCSFGCGSGICIAPNVCSCQDGEQGATCP. Residues 142–180 form the EGF-like 2; calcium-binding domain; it reads DIDECLSSSCEGHCVNTEGGFVCECGPGMQLSADRHSCQ. 9 cysteine pairs are disulfide-bonded: Cys-146-Cys-155, Cys-151-Cys-164, Cys-166-Cys-179, Cys-185-Cys-194, Cys-190-Cys-203, Cys-205-Cys-218, Cys-224-Cys-237, Cys-233-Cys-246, and Cys-248-Cys-261. The EGF-like 3; calcium-binding domain occupies 181–219; sequence DTDECLGTPCQQRCKNSIGSYKCSCRAGFHLHGNRHSCI. The region spanning 220 to 262 is the EGF-like 4; calcium-binding domain; that stretch reads DVNECRRPQERRVCHHTCHNTVGSFLCTCRPGFRLRSDRVSCE. 2 disordered regions span residues 291–317 and 339–374; these read AGRPALSPGHSPPPGAPGYPTGVRTIS and PSSSPLGTLGPPSLLQGAVGTPSSPRGPESPKLGAG. The span at 339-353 shows a compositional bias: low complexity; it reads PSSSPLGTLGPPSLL. 6 VWFC domains span residues 376–433, 433–494, 491–552, 558–618, 619–677, and 677–762; these read SSCW…PSCT, TGCF…GRCY, GRCY…FTCR, TGCS…PDCS, AGCT…PVCH, and HDCN…VNCS. Asn-454 and Asn-464 each carry an N-linked (GlcNAc...) asparagine glycan. A disordered region spans residues 731–774; that stretch reads PLEEKQQPSPHGELAKAARNARGDTEVPVNCSSCPGPPSASPTR. Basic and acidic residues predominate over residues 743 to 755; it reads ELAKAARNARGDT. A glycan (N-linked (GlcNAc...) asparagine) is linked at Asn-787. The segment covering 791 to 807 has biased composition (polar residues); sequence IQSASPSPPIAQTSSSP. Disordered stretches follow at residues 791 to 861 and 879 to 929; these read IQSA…SSTF and AETP…NSTI. Positions 889–903 are enriched in low complexity; sequence LSETLTTSSSSQRLS.

It localises to the secreted. In terms of biological role, may be a regulatory element in the beta-catenin signaling pathway and a target for chemoprevention of hapatocellular carcinoma. In Mus musculus (Mouse), this protein is von Willebrand factor C and EGF domain-containing protein (Vwce).